The primary structure comprises 70 residues: Putative membrane protein insertion efficiency factor (70 aa).

The protein belongs to the UPF0161 family.

The protein localises to the cell membrane. Its function is as follows. Could be involved in insertion of integral membrane proteins into the membrane. In Rubrobacter xylanophilus (strain DSM 9941 / JCM 11954 / NBRC 16129 / PRD-1), this protein is Putative membrane protein insertion efficiency factor.